The chain runs to 293 residues: ATP synthase gamma chain (293 aa).

It belongs to the ATPase gamma chain family. In terms of assembly, F-type ATPases have 2 components, CF(1) - the catalytic core - and CF(0) - the membrane proton channel. CF(1) has five subunits: alpha(3), beta(3), gamma(1), delta(1), epsilon(1). CF(0) has three main subunits: a, b and c.

Its subcellular location is the cell inner membrane. Its function is as follows. Produces ATP from ADP in the presence of a proton gradient across the membrane. The gamma chain is believed to be important in regulating ATPase activity and the flow of protons through the CF(0) complex. The sequence is that of ATP synthase gamma chain from Gluconacetobacter diazotrophicus (strain ATCC 49037 / DSM 5601 / CCUG 37298 / CIP 103539 / LMG 7603 / PAl5).